The chain runs to 186 residues: Cell division protein SepF (186 aa).

Disordered regions lie at residues 14–59 (EHDE…NETS) and 157–186 (GRSQESNETSSSVSSDNFPTWGYETSRLAQ). Over residues 16–27 (DEYEEDYDEEME) the composition is skewed to acidic residues. The segment covering 159–171 (SQESNETSSSVSS) has biased composition (low complexity).

This sequence belongs to the SepF family. As to quaternary structure, homodimer. Interacts with FtsZ.

It is found in the cytoplasm. Its function is as follows. Cell division protein that is part of the divisome complex and is recruited early to the Z-ring. Probably stimulates Z-ring formation, perhaps through the cross-linking of FtsZ protofilaments. Its function overlaps with FtsA. The polypeptide is Cell division protein SepF (Synechocystis sp. (strain ATCC 27184 / PCC 6803 / Kazusa)).